The following is a 261-amino-acid chain: Carbonic anhydrase 1 (261 aa).

Ala2 carries the N-acetylalanine modification. In terms of domain architecture, Alpha-carbonic anhydrase spans 4–261; the sequence is PDWGYDGENG…LKGRTVKASF (258 aa). Residues 22-41 are disordered; sequence PIANGNNQSPIDIKTSETKR. His65 acts as the Proton donor/acceptor in catalysis. Residues His95, His97, and His120 each contribute to the Zn(2+) site. Substrate-binding positions include Thr200 and 200–201; that span reads TH.

The protein belongs to the alpha-carbonic anhydrase family. Requires Zn(2+) as cofactor.

The protein localises to the cytoplasm. It catalyses the reaction hydrogencarbonate + H(+) = CO2 + H2O. The catalysed reaction is urea = cyanamide + H2O. With respect to regulation, inhibited by acetazolamide. In terms of biological role, catalyzes the reversible hydration of carbon dioxide. Can hydrate cyanamide to urea. In Ovis aries (Sheep), this protein is Carbonic anhydrase 1 (CA1).